We begin with the raw amino-acid sequence, 156 residues long: Small ribosomal subunit protein uS7 (156 aa).

Belongs to the universal ribosomal protein uS7 family. In terms of assembly, part of the 30S ribosomal subunit. Contacts proteins S9 and S11.

Its function is as follows. One of the primary rRNA binding proteins, it binds directly to 16S rRNA where it nucleates assembly of the head domain of the 30S subunit. Is located at the subunit interface close to the decoding center, probably blocks exit of the E-site tRNA. This is Small ribosomal subunit protein uS7 from Aster yellows witches'-broom phytoplasma (strain AYWB).